The following is a 268-amino-acid chain: CCAAT/enhancer-binding protein delta (268 aa).

Disordered regions lie at residues 1-50, 98-132, and 152-223; these read MSAA…STTP, LELLQGGPTRPPGVGSIARGPLKREPDWGDGDAPG, and AAQP…QQKL. Ser2 is subject to N-acetylserine. Lys120 participates in a covalent cross-link: Glycyl lysine isopeptide (Lys-Gly) (interchain with G-Cter in SUMO). Positions 155–173 are enriched in pro residues; sequence PTPPTSPEPPRGSPGPSLA. The span at 177–201 shows a compositional bias: basic and acidic residues; it reads VREKGAGKRGPDRGSPEYRQRRERN. The 64-residue stretch at 191-254 folds into the bZIP domain; the sequence is SPEYRQRRER…ASLRQFFKEL (64 aa). The basic motif stretch occupies residues 195–222; that stretch reads RQRRERNNIAVRKSRDKAKRRNQEMQQK. The tract at residues 226-254 is leucine-zipper; that stretch reads LSAENEKLHQRVEQLTRDLASLRQFFKEL.

Belongs to the bZIP family. C/EBP subfamily. Binds DNA as a homodimer and as a heterodimer. Can form stable heterodimers with CEBPA, CEBPB and CEBPE. Directly interacts with SPI1/PU.1; this interaction does not affect DNA-binding properties of each partner. Interacts with PRDM16. Ubiquitously expressed.

It is found in the nucleus. Transcription activator that recognizes two different DNA motifs: the CCAAT homology common to many promoters and the enhanced core homology common to many enhancers. Important transcription factor regulating the expression of genes involved in immune and inflammatory responses. Transcriptional activator that enhances IL6 transcription alone and as heterodimer with CEBPB. This chain is CCAAT/enhancer-binding protein delta (Cebpd), found in Rattus norvegicus (Rat).